The chain runs to 130 residues: MSESYDRGLVADFGRWTEFSAGMWAWVFHKFTGWVLVGYLFTHISVLSTSLQGAQVYNSTLSGLESLAIVRLLEVGLLAVAVFHILNGIRLLFVDLGVGLEAQDKSFYASLVLTGVIVVASVPTFLTGAF.

Over 1-25 the chain is Cytoplasmic; it reads MSESYDRGLVADFGRWTEFSAGMWA. Residues 26–46 form a helical membrane-spanning segment; the sequence is WVFHKFTGWVLVGYLFTHISV. The Periplasmic segment spans residues 47–71; the sequence is LSTSLQGAQVYNSTLSGLESLAIVR. The helical transmembrane segment at 72–93 threads the bilayer; it reads LLEVGLLAVAVFHILNGIRLLF. Residue His84 participates in heme binding. Residues 94–103 lie on the Cytoplasmic side of the membrane; that stretch reads VDLGVGLEAQ. Residues 104–128 form a helical membrane-spanning segment; the sequence is DKSFYASLVLTGVIVVASVPTFLTG.

Part of an enzyme complex containing four subunits: a flavoprotein, an iron-sulfur protein, plus two membrane-anchoring proteins, SdhC and SdhD. Heme is required as a cofactor.

It is found in the cell membrane. It participates in carbohydrate metabolism; tricarboxylic acid cycle. Its function is as follows. Membrane-anchoring subunit of succinate dehydrogenase (SDH). The polypeptide is Succinate dehydrogenase hydrophobic membrane anchor subunit (sdhD) (Halobacterium salinarum (strain ATCC 700922 / JCM 11081 / NRC-1) (Halobacterium halobium)).